Here is a 221-residue protein sequence, read N- to C-terminus: AGPIASRQIVPNYPASSTSKGFHLVVNVTDPSADFTPSINNFYVNSIHVGAALNYVGVTAVPGRIFYQNGTAEEIRYAQSTVISDGATPPVPFGLSLRPDEGSDVVSTARLDAGPGTTGVRVSRFPEPYRFLQPETFLACNESLAYYQGDYFTVIKQADVTVGDDGSIDYNVPDNCISVRLIPECTELNELPEDAYASHEFAADTQCYDDVSALNWSEYGP.

Residues Asn27, Asn69, Asn141, and Asn215 are each glycosylated (N-linked (GlcNAc...) asparagine).

In terms of tissue distribution, expressed in the mycelium (at protein level).

Its subcellular location is the secreted. It localises to the spore. The protein localises to the spore wall. It is found in the cytoplasm. The polypeptide is Antigenic protein SchS34 (Stachybotrys chartarum (Toxic black mold)).